Reading from the N-terminus, the 469-residue chain is Putative F-box/LRR-repeat protein At5g02930 (469 aa).

One can recognise an F-box domain in the interval 27–77 (VDSISDLPDAVLQHIFSYIPTELAIRTSVLSKRWRHVWSETPHLSFEWLKV). LRR repeat units lie at residues 30–58 (ISDL…VLSK), 178–203 (DCTM…SLKF), 204–214 (CMSLKYLNLSK), 223–250 (IERI…RLRD), 296–321 (TMLK…SLSK), and 341–366 (IIRS…TVYT).

This Arabidopsis thaliana (Mouse-ear cress) protein is Putative F-box/LRR-repeat protein At5g02930.